The following is a 328-amino-acid chain: Tetraacyldisaccharide 4'-kinase (328 aa).

Residue 55-62 (TAGGNGKT) coordinates ATP.

This sequence belongs to the LpxK family.

The catalysed reaction is a lipid A disaccharide + ATP = a lipid IVA + ADP + H(+). The protein operates within glycolipid biosynthesis; lipid IV(A) biosynthesis; lipid IV(A) from (3R)-3-hydroxytetradecanoyl-[acyl-carrier-protein] and UDP-N-acetyl-alpha-D-glucosamine: step 6/6. Functionally, transfers the gamma-phosphate of ATP to the 4'-position of a tetraacyldisaccharide 1-phosphate intermediate (termed DS-1-P) to form tetraacyldisaccharide 1,4'-bis-phosphate (lipid IVA). The polypeptide is Tetraacyldisaccharide 4'-kinase (Yersinia enterocolitica serotype O:8 / biotype 1B (strain NCTC 13174 / 8081)).